The chain runs to 250 residues: Small ribosomal subunit protein uS2 (250 aa).

The protein belongs to the universal ribosomal protein uS2 family.

This Paraburkholderia phytofirmans (strain DSM 17436 / LMG 22146 / PsJN) (Burkholderia phytofirmans) protein is Small ribosomal subunit protein uS2.